The sequence spans 89 residues: Small ribosomal subunit protein uS15 (89 aa).

This sequence belongs to the universal ribosomal protein uS15 family. In terms of assembly, part of the 30S ribosomal subunit. Forms a bridge to the 50S subunit in the 70S ribosome, contacting the 23S rRNA.

Its function is as follows. One of the primary rRNA binding proteins, it binds directly to 16S rRNA where it helps nucleate assembly of the platform of the 30S subunit by binding and bridging several RNA helices of the 16S rRNA. In terms of biological role, forms an intersubunit bridge (bridge B4) with the 23S rRNA of the 50S subunit in the ribosome. This chain is Small ribosomal subunit protein uS15, found in Streptococcus equi subsp. zooepidemicus (strain H70).